We begin with the raw amino-acid sequence, 381 residues long: ELMO domain-containing protein 3 (381 aa).

The 155-residue stretch at T170–P324 folds into the ELMO domain.

In terms of tissue distribution, both isoform 1 and isoform 2 are widely expressed.

The protein resides in the cell projection. It is found in the stereocilium. The protein localises to the kinocilium. It localises to the cytoplasm. Its subcellular location is the cytoskeleton. Its function is as follows. Acts as a GTPase-activating protein (GAP) for ARL2 with low specific activity. This chain is ELMO domain-containing protein 3 (Elmod3), found in Mus musculus (Mouse).